The following is a 122-amino-acid chain: Large ribosomal subunit protein uL14 (122 aa).

The protein belongs to the universal ribosomal protein uL14 family. In terms of assembly, part of the 50S ribosomal subunit. Forms a cluster with proteins L3 and L19. In the 70S ribosome, L14 and L19 interact and together make contacts with the 16S rRNA in bridges B5 and B8.

In terms of biological role, binds to 23S rRNA. Forms part of two intersubunit bridges in the 70S ribosome. This Chlorobaculum parvum (strain DSM 263 / NCIMB 8327) (Chlorobium vibrioforme subsp. thiosulfatophilum) protein is Large ribosomal subunit protein uL14.